The following is a 47-amino-acid chain: High light-inducible protein HliC (47 aa).

Residues 1–14 (MNNENSKFGFTAFA) lie on the Cytoplasmic side of the membrane. Residues 15–20 (ENWNGR) carry the Chlorophyll-binding motif motif. A membrane pass occupies residues 15–36 (ENWNGRLAMIGFSSALILELVS). At 37-47 (GQGVLHFFGIL) the chain is on the lumenal, thylakoid side.

The protein belongs to the Hlip family. In terms of assembly, forms heterodimers with both HliA and HliB; these are associated with photosystem II (PSII) assembly intermediates containing CP47 (psbB). In the absence of CP47 (psbB) and HliD, forms a homooligomer in vivo that binds 2 chlorophyll a and 1 beta-carotenoid per monomer. Cofractionates in an approximately 50 kDa fraction the thylakoid membrane with HliD. Associated in vivo with monomeric PSII. Purified in several chlorophyll- and carotenoid-containing complexes, including photosystem II (PSII) assembly intermediate complex RCII* (iD1, D1, D2, PsbE, PsbF, PsbI, Ycf39, Ycf48, HliC and HliD) and the Ycf39-Hlip complex (Ycf39, HliC, HliD and pigments).

The protein resides in the cellular thylakoid membrane. Functionally, forms a number of heteromers involved in photosystem II (PSII) assembly and/or repair under high light stress. Required for binding of chlorophyll and carotenoids by the Ycf39-Hlip complex. The Ycf39-Hlip complex binds D1 at an early stage of PSII assembly along with Ycf48, ribosomes and ChlG, the last enzyme in chlorophyll biosynthesis; it may be involved in chlorophyll reuse and delivery to D1 in the initial stages of PSII assembly. HliA-HliC and HliB-HliC heterodimers bind chlorophyll and carotenoids in a 1:0.6 ratio. Complexes bind mostly beta-carotenoid, but minor amounts of echinenone and beta-crytoxanthin are also detected. The complexes efficiently quench chlorophyll fluorescence, contributing to photoprotection. Deletion of 4 to 5 members of the Hlip family suggests the proteins are involved in regulation of chlorophyll biosynthesis, in stabilization of chlorophyll-binding proteins and/or in reuse of chlorophylls, and may regulate tetrapyrrole biosynthesis. Might bind chlorophyll and/or carotenoids in association with HliD (called the ScpBE pair). Its function is as follows. The Hlips might regulate tetrapyrrole biosynthesis, maybe at the level of aminolevulinic acid synthesis and probably stabilize PSII assembly intermediates. The chain is High light-inducible protein HliC (hliC) from Synechocystis sp. (strain ATCC 27184 / PCC 6803 / Kazusa).